Consider the following 87-residue polypeptide: Small ribosomal subunit protein bS20 (87 aa).

The segment at 1-25 (MANTAQARKRARQSVQRNKHNSSLR) is disordered. A compositionally biased stretch (basic residues) spans 7 to 22 (ARKRARQSVQRNKHNS).

Belongs to the bacterial ribosomal protein bS20 family.

In terms of biological role, binds directly to 16S ribosomal RNA. This Bordetella bronchiseptica (strain ATCC BAA-588 / NCTC 13252 / RB50) (Alcaligenes bronchisepticus) protein is Small ribosomal subunit protein bS20.